The chain runs to 60 residues: Protein AC4 (60 aa).

This sequence belongs to the geminiviridae protein AC4/C4 family.

Pathogenicity determinant. May act as a suppressor of RNA-mediated gene silencing, also known as post-transcriptional gene silencing (PTGS), a mechanism of plant viral defense that limits the accumulation of viral RNAs. The chain is Protein AC4 from Pepper huasteco yellow vein virus (PHYVV).